A 170-amino-acid polypeptide reads, in one-letter code: Envelope protein 166 (170 aa).

Position 1 (Met1) is a topological domain, intravirion. Residues 2–22 (FYPVVQVLIGIILVIILILGF) form a helical membrane-spanning segment. The Virion surface segment spans residues 23 to 170 (YHMKHKPPKK…TVMGIARNVL (148 aa)).

This sequence belongs to the asfivirus envelope protein p22 family.

It is found in the virion membrane. Its subcellular location is the host cell membrane. The protein is Envelope protein 166 of Ornithodoros (relapsing fever ticks).